The chain runs to 619 residues: Kinesin light chain 4 (619 aa).

Ser2 carries the N-acetylserine modification. Residues 32–150 are a coiled coil; that stretch reads GLESLHSEHQ…EEEKKHLEFL (119 aa). One copy of the TPR 1 repeat lies at 55-88; that stretch reads QQGGHEEGLVHEKARQLRRSMENIELGLSEAQVM. Over residues 156 to 175 the composition is skewed to basic and acidic residues; that stretch reads YDEDGHSMEEKEGDASKDSL. Residues 156–200 form a disordered region; it reads YDEDGHSMEEKEGDASKDSLDDLFPNEEEEDSSNDLSRGQGAAAA. Ser174 carries the post-translational modification Phosphoserine. A compositionally biased stretch (acidic residues) spans 179–188; sequence FPNEEEEDSS. 5 TPR repeats span residues 211–244, 253–286, 295–328, 337–370, and 379–412; these read LRTL…LERT, ATML…REST, AATL…REKV, AKQL…YERQ, and ARTK…AHVQ. Position 460 is a phosphoserine (Ser460). The stretch at 464–497 is one TPR 7 repeat; sequence NTTLRNLGALYRRQGKLEAAETLEECALRSRKQG. 3 positions are modified to phosphoserine: Ser565, Ser566, and Ser590. The tract at residues 571–619 is disordered; sequence RKLQGTEPRPSSSNMKRAASLNYLNQPNAAPLQTSRGLSASTVDLSSSS. A compositionally biased stretch (polar residues) spans 592–608; that stretch reads NYLNQPNAAPLQTSRGL. The segment covering 609–619 has biased composition (low complexity); that stretch reads SASTVDLSSSS. Thr612 carries the post-translational modification Phosphothreonine.

This sequence belongs to the kinesin light chain family. In terms of assembly, oligomeric complex composed of two heavy chains and two light chains.

The protein localises to the cytoplasm. Its subcellular location is the cytoskeleton. Its function is as follows. Kinesin is a microtubule-associated force-producing protein that may play a role in organelle transport. The light chain may function in coupling of cargo to the heavy chain or in the modulation of its ATPase activity. The chain is Kinesin light chain 4 (Klc4) from Rattus norvegicus (Rat).